We begin with the raw amino-acid sequence, 218 residues long: uncharacterized protein (218 aa).

The signal sequence occupies residues 1-21 (MKKFVYKYSFGALLLLSGLSS). Cys-22 carries N-palmitoyl cysteine lipidation. Cys-22 carries the S-diacylglycerol cysteine lipid modification.

Belongs to the chlamydial CPn_0875/CT_734/TC_0107 family.

The protein localises to the cell membrane. This is an uncharacterized protein from Chlamydia muridarum (strain MoPn / Nigg).